Consider the following 445-residue polypeptide: Xylose isomerase (445 aa).

Catalysis depends on residues histidine 107 and aspartate 110. Mg(2+) is bound by residues glutamate 238, glutamate 274, histidine 277, aspartate 302, aspartate 313, aspartate 315, and aspartate 345.

It belongs to the xylose isomerase family. As to quaternary structure, homotetramer. Requires Mg(2+) as cofactor.

The protein resides in the cytoplasm. The enzyme catalyses alpha-D-xylose = alpha-D-xylulofuranose. The protein is Xylose isomerase of Bacillus velezensis (strain DSM 23117 / BGSC 10A6 / LMG 26770 / FZB42) (Bacillus amyloliquefaciens subsp. plantarum).